We begin with the raw amino-acid sequence, 782 residues long: Sulfate permease family protein 3 (782 aa).

12 consecutive transmembrane segments (helical) span residues Y30–P52, L64–I84, G86–F106, A113–L133, I196–F216, G232–I252, L274–F294, W302–I322, H359–A379, A398–F418, L433–L453, and F497–V517. In terms of domain architecture, STAS spans K546–A700. Residues I728–E742 show a composition bias toward acidic residues. A disordered region spans residues I728–E782. A compositionally biased stretch (polar residues) spans D767–E782.

It belongs to the SLC26A/SulP transporter (TC 2.A.53) family.

The protein localises to the membrane. In terms of biological role, possible sulfate transporter. This chain is Sulfate permease family protein 3 (sulp-3), found in Caenorhabditis elegans.